The following is a 537-amino-acid chain: Phosphoenolpyruvate carboxykinase (ATP) (537 aa).

Positions 61, 195, and 201 each coordinate substrate. ATP contacts are provided by residues Lys-201, His-220, and 236-244 (GLSGTGKTT). Residues Lys-201 and His-220 each contribute to the Mn(2+) site. Asp-257 provides a ligand contact to Mn(2+). Residues Glu-285, Arg-323, and Thr-448 each coordinate ATP. Arg-323 serves as a coordination point for substrate.

This sequence belongs to the phosphoenolpyruvate carboxykinase (ATP) family. Mn(2+) serves as cofactor.

The protein resides in the cytoplasm. The catalysed reaction is oxaloacetate + ATP = phosphoenolpyruvate + ADP + CO2. It functions in the pathway carbohydrate biosynthesis; gluconeogenesis. Functionally, involved in the gluconeogenesis. Catalyzes the conversion of oxaloacetate (OAA) to phosphoenolpyruvate (PEP) through direct phosphoryl transfer between the nucleoside triphosphate and OAA. This Rhodopseudomonas palustris (strain TIE-1) protein is Phosphoenolpyruvate carboxykinase (ATP).